The chain runs to 313 residues: Porphobilinogen deaminase (313 aa).

An S-(dipyrrolylmethanemethyl)cysteine modification is found at cysteine 242.

This sequence belongs to the HMBS family. As to quaternary structure, monomer. Requires dipyrromethane as cofactor.

It catalyses the reaction 4 porphobilinogen + H2O = hydroxymethylbilane + 4 NH4(+). It participates in porphyrin-containing compound metabolism; protoporphyrin-IX biosynthesis; coproporphyrinogen-III from 5-aminolevulinate: step 2/4. In terms of biological role, tetrapolymerization of the monopyrrole PBG into the hydroxymethylbilane pre-uroporphyrinogen in several discrete steps. The polypeptide is Porphobilinogen deaminase (Pseudomonas fluorescens (strain SBW25)).